The sequence spans 662 residues: Glutathione hydrolase 7 (662 aa).

Residues 1–106 (MAAENEASQE…ASECSCRQDG (106 aa)) are Cytoplasmic-facing. Phosphoserine is present on residues Ser-17, Ser-72, Ser-79, and Ser-83. The interval 26–90 (SFPRLPEDEP…DGSPLRETRK (65 aa)) is disordered. Residues 72 to 83 (SSSSEMGSQDGS) show a composition bias toward low complexity. The chain crosses the membrane as a helical; Signal-anchor for type II membrane protein span at residues 107–127 (LTVIVTACLTFATGVTVALIM). Topologically, residues 128–662 (QIYFGDPQIF…SPDAAGATIL (535 aa)) are extracellular. Residues Asn-198, Asn-267, Asn-283, Asn-330, Asn-353, Asn-394, Asn-452, Asn-519, and Asn-586 are each glycosylated (N-linked (GlcNAc...) asparagine).

It belongs to the gamma-glutamyltransferase family. In terms of assembly, heterodimer composed of the light and heavy chains. The active site is located in the light chain. Cleaved by autocatalysis into a large and a small subunit and the autocatalytic cleavage is essential to the functional activation of the enzyme.

It localises to the membrane. It catalyses the reaction an N-terminal (5-L-glutamyl)-[peptide] + an alpha-amino acid = 5-L-glutamyl amino acid + an N-terminal L-alpha-aminoacyl-[peptide]. The catalysed reaction is glutathione + H2O = L-cysteinylglycine + L-glutamate. It carries out the reaction an S-substituted glutathione + H2O = an S-substituted L-cysteinylglycine + L-glutamate. It participates in sulfur metabolism; glutathione metabolism. Its function is as follows. Hydrolyzes and transfers gamma-glutamyl moieties from glutathione and other gamma-glutamyl compounds to acceptors. The chain is Glutathione hydrolase 7 from Bos taurus (Bovine).